Here is a 286-residue protein sequence, read N- to C-terminus: Shikimate dehydrogenase (NADP(+)) (286 aa).

Shikimate is bound by residues S19 to S21 and T66. The active-site Proton acceptor is K70. Shikimate contacts are provided by N91 and D107. Residues G129–A133 and L229 each bind NADP(+). Position 231 (Y231) interacts with shikimate. G252 lines the NADP(+) pocket.

The protein belongs to the shikimate dehydrogenase family. Homodimer.

It carries out the reaction shikimate + NADP(+) = 3-dehydroshikimate + NADPH + H(+). The protein operates within metabolic intermediate biosynthesis; chorismate biosynthesis; chorismate from D-erythrose 4-phosphate and phosphoenolpyruvate: step 4/7. Involved in the biosynthesis of the chorismate, which leads to the biosynthesis of aromatic amino acids. Catalyzes the reversible NADPH linked reduction of 3-dehydroshikimate (DHSA) to yield shikimate (SA). This Prochlorococcus marinus (strain MIT 9301) protein is Shikimate dehydrogenase (NADP(+)).